We begin with the raw amino-acid sequence, 632 residues long: Putative ankyrin repeat protein L767 (632 aa).

5 ANK repeats span residues 61–97 (YGNT…DYEF), 228–250 (FDNE…YIVE), 251–282 (KGFY…NLTD), 345–374 (NLDI…NVDD), and 517–546 (NSIE…NDTD).

This Acanthamoeba polyphaga mimivirus (APMV) protein is Putative ankyrin repeat protein L767.